Here is a 53-residue protein sequence, read N- to C-terminus: Conotoxin Cal9.2e (53 aa).

Residues 1–6 (KKGVTQ) constitute a propeptide that is removed on maturation. 3 cysteine pairs are disulfide-bonded: cysteine 15–cysteine 32, cysteine 20–cysteine 42, and cysteine 22–cysteine 47.

Expressed by the venom duct.

It is found in the secreted. Functionally, probable neurotoxin with unknown target. Possibly targets ion channels. The chain is Conotoxin Cal9.2e from Californiconus californicus (California cone).